A 199-amino-acid chain; its full sequence is Large ribosomal subunit protein bL9 (199 aa).

Residues 153–199 (KPVKASEKKGRRPRRDEEASDEQILAEENSVTEEAVSEEIQNSESEN) are disordered.

The protein belongs to the bacterial ribosomal protein bL9 family.

Its function is as follows. Binds to the 23S rRNA. This is Large ribosomal subunit protein bL9 from Treponema denticola (strain ATCC 35405 / DSM 14222 / CIP 103919 / JCM 8153 / KCTC 15104).